Consider the following 645-residue polypeptide: Macrolide export ATP-binding/permease protein MacB (645 aa).

An ABC transporter domain is found at 6-244 (IELKDVTRYY…EAPQYRYARK (239 aa)). Position 42–49 (42–49 (GQSGSGKS)) interacts with ATP. Transmembrane regions (helical) follow at residues 271–291 (ALTL…LAIG), 520–540 (FSIL…IGVM), 577–597 (VVGG…VFII), and 608–628 (PLPA…FGLL).

The protein belongs to the ABC transporter superfamily. Macrolide exporter (TC 3.A.1.122) family. As to quaternary structure, homodimer.

It localises to the cell inner membrane. Its function is as follows. Non-canonical ABC transporter that contains transmembrane domains (TMD), which form a pore in the inner membrane, and an ATP-binding domain (NBD), which is responsible for energy generation. Confers resistance against macrolides. This is Macrolide export ATP-binding/permease protein MacB from Hyphomonas neptunium (strain ATCC 15444).